Consider the following 447-residue polypeptide: Probable glycine dehydrogenase (decarboxylating) subunit 1 (447 aa).

The protein belongs to the GcvP family. N-terminal subunit subfamily. As to quaternary structure, the glycine cleavage system is composed of four proteins: P, T, L and H. In this organism, the P 'protein' is a heterodimer of two subunits.

It catalyses the reaction N(6)-[(R)-lipoyl]-L-lysyl-[glycine-cleavage complex H protein] + glycine + H(+) = N(6)-[(R)-S(8)-aminomethyldihydrolipoyl]-L-lysyl-[glycine-cleavage complex H protein] + CO2. The glycine cleavage system catalyzes the degradation of glycine. The P protein binds the alpha-amino group of glycine through its pyridoxal phosphate cofactor; CO(2) is released and the remaining methylamine moiety is then transferred to the lipoamide cofactor of the H protein. This is Probable glycine dehydrogenase (decarboxylating) subunit 1 from Azorhizobium caulinodans (strain ATCC 43989 / DSM 5975 / JCM 20966 / LMG 6465 / NBRC 14845 / NCIMB 13405 / ORS 571).